We begin with the raw amino-acid sequence, 455 residues long: Fumarate hydratase class II (455 aa).

Substrate is bound by residues serine 96–threonine 98, histidine 122–aspartate 125, serine 132–asparagine 134, and threonine 180. Histidine 181 acts as the Proton donor/acceptor in catalysis. Serine 311 is an active-site residue. Substrate-binding positions include serine 312 and lysine 317 to asparagine 319.

This sequence belongs to the class-II fumarase/aspartase family. Fumarase subfamily. Homotetramer.

The protein localises to the cytoplasm. It carries out the reaction (S)-malate = fumarate + H2O. Its pathway is carbohydrate metabolism; tricarboxylic acid cycle; (S)-malate from fumarate: step 1/1. Its function is as follows. Involved in the TCA cycle. Catalyzes the stereospecific interconversion of fumarate to L-malate. The chain is Fumarate hydratase class II from Listeria monocytogenes serotype 4b (strain F2365).